Consider the following 227-residue polypeptide: Large ribosomal subunit protein uL3 (227 aa).

Gln-151 bears the N5-methylglutamine mark.

The protein belongs to the universal ribosomal protein uL3 family. Part of the 50S ribosomal subunit. Forms a cluster with proteins L14 and L19. Post-translationally, methylated by PrmB.

In terms of biological role, one of the primary rRNA binding proteins, it binds directly near the 3'-end of the 23S rRNA, where it nucleates assembly of the 50S subunit. The chain is Large ribosomal subunit protein uL3 from Gluconacetobacter diazotrophicus (strain ATCC 49037 / DSM 5601 / CCUG 37298 / CIP 103539 / LMG 7603 / PAl5).